A 347-amino-acid chain; its full sequence is GMP reductase (347 aa).

108 to 131 (NDFLKLQRILALSPALRFICVDVA) is a binding site for NADP(+). Residues Gly181 and Gly183 each contribute to the K(+) site. Cys186 functions as the Thioimidate intermediate in the catalytic mechanism. 216–239 (IVGDGGCTCPGDVAKAFGGGADFV) contributes to the NADP(+) binding site.

This sequence belongs to the IMPDH/GMPR family. GuaC type 1 subfamily. As to quaternary structure, homotetramer.

The catalysed reaction is IMP + NH4(+) + NADP(+) = GMP + NADPH + 2 H(+). Functionally, catalyzes the irreversible NADPH-dependent deamination of GMP to IMP. It functions in the conversion of nucleobase, nucleoside and nucleotide derivatives of G to A nucleotides, and in maintaining the intracellular balance of A and G nucleotides. In Tolumonas auensis (strain DSM 9187 / NBRC 110442 / TA 4), this protein is GMP reductase.